The sequence spans 429 residues: Adenylosuccinate synthetase (429 aa).

Residues 12 to 18 (GDEGKGK) and 40 to 42 (GHT) contribute to the GTP site. The active-site Proton acceptor is Asp-13. Positions 13 and 40 each coordinate Mg(2+). IMP-binding positions include 13–16 (DEGK), 38–41 (NAGH), Thr-129, Arg-143, Gln-223, Thr-238, and Arg-302. The Proton donor role is filled by His-41. A substrate-binding site is contributed by 298–304 (TVTGRKR). GTP contacts are provided by residues Arg-304, 330 to 332 (KLD), and 412 to 414 (STS).

Belongs to the adenylosuccinate synthetase family. Homodimer. It depends on Mg(2+) as a cofactor.

Its subcellular location is the cytoplasm. It carries out the reaction IMP + L-aspartate + GTP = N(6)-(1,2-dicarboxyethyl)-AMP + GDP + phosphate + 2 H(+). Its pathway is purine metabolism; AMP biosynthesis via de novo pathway; AMP from IMP: step 1/2. Its function is as follows. Plays an important role in the de novo pathway of purine nucleotide biosynthesis. Catalyzes the first committed step in the biosynthesis of AMP from IMP. The sequence is that of Adenylosuccinate synthetase from Rhizorhabdus wittichii (strain DSM 6014 / CCUG 31198 / JCM 15750 / NBRC 105917 / EY 4224 / RW1) (Sphingomonas wittichii).